The chain runs to 313 residues: MMENYKHFTVLLDEAVNGLNIRPDGIYIDGTFGRGGHSRLILSQLGEEGRLLAIDRDPQAIAVAKTIDDPRFSIIHGPFSALGEYVADRDLIGKIDGILLDLGVSSPQLDDAERGFSFMRDGPLDMRMDPTRGQSAAEWLQTAEEADIAWVLKTYGEERFAKRIARAIVEHNREQPMTRTKELAEVVAAATPVKDKFKHPATRTFQAVRIWVNSELEEIEQALKSSLHVLAPGGRLSIISFHSLEDRIVKRFMRENSRGPQVPAGLPMTEEQLKKLGGRQLRALGKLMPGEEEVAENPRARSSVLRIAERTNA.

Residues 35 to 37, Asp-55, Phe-79, Asp-101, and Gln-108 each bind S-adenosyl-L-methionine; that span reads GGH.

This sequence belongs to the methyltransferase superfamily. RsmH family.

The protein localises to the cytoplasm. It catalyses the reaction cytidine(1402) in 16S rRNA + S-adenosyl-L-methionine = N(4)-methylcytidine(1402) in 16S rRNA + S-adenosyl-L-homocysteine + H(+). In terms of biological role, specifically methylates the N4 position of cytidine in position 1402 (C1402) of 16S rRNA. This Escherichia coli O6:H1 (strain CFT073 / ATCC 700928 / UPEC) protein is Ribosomal RNA small subunit methyltransferase H.